A 246-amino-acid polypeptide reads, in one-letter code: Acetoacetate decarboxylase (246 aa).

The active-site Schiff-base intermediate with acetoacetate is Lys-115.

It belongs to the ADC family.

The catalysed reaction is acetoacetate + H(+) = acetone + CO2. In terms of biological role, catalyzes the conversion of acetoacetate to acetone and carbon dioxide. The protein is Acetoacetate decarboxylase of Clostridium beijerinckii (strain ATCC 51743 / NCIMB 8052) (Clostridium acetobutylicum).